The primary structure comprises 244 residues: Cytochrome c1 (244 aa).

Residues 1-19 form the signal peptide; that stretch reads MRKLILATFLLLAPTALLA. Heme c contacts are provided by C50, C53, and H54. The helical transmembrane segment at 220–240 threads the bilayer; it reads YVLLFLGFLFILAYLLKKEYW.

The main subunits of complex b-c1 are: cytochrome b, cytochrome c1 and the Rieske protein. Post-translationally, binds 1 heme c group covalently per subunit.

It localises to the cell membrane. Functionally, component of the ubiquinol-cytochrome c reductase complex (complex III or cytochrome b-c1 complex), which is a respiratory chain that generates an electrochemical potential coupled to ATP synthesis. c1 functions as an electron donor to cytochrome c. The chain is Cytochrome c1 (petC) from Allochromatium vinosum (strain ATCC 17899 / DSM 180 / NBRC 103801 / NCIMB 10441 / D) (Chromatium vinosum).